Here is a 158-residue protein sequence, read N- to C-terminus: Probable cyclic pyranopterin monophosphate synthase (158 aa).

Substrate is bound by residues 78–80 (MCH) and 114–115 (ME). Aspartate 129 is an active-site residue.

It belongs to the MoaC family. As to quaternary structure, homohexamer; trimer of dimers.

It carries out the reaction (8S)-3',8-cyclo-7,8-dihydroguanosine 5'-triphosphate = cyclic pyranopterin phosphate + diphosphate. Its pathway is cofactor biosynthesis; molybdopterin biosynthesis. Catalyzes the conversion of (8S)-3',8-cyclo-7,8-dihydroguanosine 5'-triphosphate to cyclic pyranopterin monophosphate (cPMP). The protein is Probable cyclic pyranopterin monophosphate synthase of Methanosarcina acetivorans (strain ATCC 35395 / DSM 2834 / JCM 12185 / C2A).